We begin with the raw amino-acid sequence, 204 residues long: uncharacterized protein (204 aa).

In terms of biological role, possibly involved in pGI2 replication mechanism. This is an uncharacterized protein from Bacillus thuringiensis.